The chain runs to 293 residues: Protein boule-like (293 aa).

Residues 1 to 16 (METESRAQSTNQTQTD) show a composition bias toward polar residues. The disordered stretch occupies residues 1-39 (METESRAQSTNQTQTDSLSPSPNPVSPVPLNNPTSGPRY). 3 positions are modified to phosphoserine: S19, S21, and S26. Positions 45–122 (NRIFVGGIDF…KKLNIGPAIR (78 aa)) constitute an RRM domain. One can recognise a DAZ domain in the interval 172–196 (PSRSISSSPVMVAQPVYQQPAYHYQ).

The protein belongs to the RRM DAZ family. In terms of assembly, interacts with DAZ1 and DAZL. Testis specific. Not expressed in early embryos, primoridal germ cells and spermatogonial cells. First expressed in the cytoplasm of spermatocytes and then persists through meiosis.

It is found in the cytoplasm. In terms of biological role, probable RNA-binding protein, which may be required during spermatogenesis. May act by binding to the 3'-UTR of mRNAs and regulating their translation. This is Protein boule-like from Mus musculus (Mouse).